The chain runs to 44 residues: Photosystem I reaction center subunit IX (44 aa).

A helical membrane pass occupies residues 7-27 (YLSVAPVLTTLWFGSLAGLLI).

Belongs to the PsaJ family.

It is found in the plastid. It localises to the chloroplast thylakoid membrane. May help in the organization of the PsaE and PsaF subunits. The chain is Photosystem I reaction center subunit IX from Nymphaea alba (White water-lily).